The primary structure comprises 198 residues: FMN-dependent NADH:quinone oxidoreductase (198 aa).

FMN is bound at residue Ser-10.

This sequence belongs to the azoreductase type 1 family. In terms of assembly, homodimer. It depends on FMN as a cofactor.

It carries out the reaction 2 a quinone + NADH + H(+) = 2 a 1,4-benzosemiquinone + NAD(+). The enzyme catalyses N,N-dimethyl-1,4-phenylenediamine + anthranilate + 2 NAD(+) = 2-(4-dimethylaminophenyl)diazenylbenzoate + 2 NADH + 2 H(+). In terms of biological role, quinone reductase that provides resistance to thiol-specific stress caused by electrophilic quinones. Functionally, also exhibits azoreductase activity. Catalyzes the reductive cleavage of the azo bond in aromatic azo compounds to the corresponding amines. In Paraburkholderia phymatum (strain DSM 17167 / CIP 108236 / LMG 21445 / STM815) (Burkholderia phymatum), this protein is FMN-dependent NADH:quinone oxidoreductase.